The sequence spans 335 residues: Lipase chaperone (335 aa).

The helical transmembrane segment at 1–21 threads the bilayer; it reads MSGSILLLPLAIALGLGFFIA.

The protein belongs to the lipase chaperone family.

Its subcellular location is the cell inner membrane. In terms of biological role, may be involved in the folding of the extracellular lipase during its passage through the periplasm. The chain is Lipase chaperone from Stutzerimonas stutzeri (strain A1501) (Pseudomonas stutzeri).